We begin with the raw amino-acid sequence, 360 residues long: SPRY domain-containing SOCS box protein 3 (360 aa).

The disordered stretch occupies residues 21-54 (DQDGRSPALHAEEEAWGYDSDGQHSNSDSDTDLL). Residues 84–274 (SLHPFRQIKS…MKVIRSCCCR (191 aa)) enclose the B30.2/SPRY domain. The 52-residue stretch at 264–315 (SMKVIRSCCCRTSLQYLCCARLRQLLPGSVDSLEVLPLPPGLKQVLSNKLGW) folds into the SOCS box domain. Positions 322–350 (NRSSQHKGDGSATTSCGSYSDSSCTPGHD) are disordered. Residues 332 to 346 (SATTSCGSYSDSSCT) are compositionally biased toward polar residues.

This sequence belongs to the SPSB family. In terms of assembly, substrate-recognition component of the ECS(SPSB3) complex, composed of spsb3, cul5, elob, elob and rnf7/rbx2.

It is found in the nucleus. It participates in protein modification; protein ubiquitination. Substrate-recognition component of a cullin-5-RING E3 ubiquitin-protein ligase complex (ECS complex, also named CRL5 complex), which mediates the ubiquitination and subsequent proteasomal degradation of target proteins. The sequence is that of SPRY domain-containing SOCS box protein 3 (spsb3) from Xenopus laevis (African clawed frog).